A 185-amino-acid polypeptide reads, in one-letter code: Capsid protein (185 aa).

The interval 136–185 (NAPILSTLPETTVVRRRDRGRSPRRRTPSPRRRRSQSPRRRRSQSRESQC) is disordered. A compositionally biased stretch (basic residues) spans 149-178 (VRRRDRGRSPRRRTPSPRRRRSQSPRRRRS). A phosphoserine; by host mark is found at Ser157, Ser164, and Ser172. A 1; half-length repeat occupies 157–163 (SPRRRTP). The interval 157–179 (SPRRRTPSPRRRRSQSPRRRRSQ) is 3 X 8 AA repeats of S-P-R-R-R-[PR]-S-Q. Positions 160–177 (RRTPSPRRRRSQSPRRRR) match the Bipartite nuclear localization signal motif. A run of 2 repeats spans residues 164-171 (SPRRRRSQ) and 172-179 (SPRRRRSQ). The interval 179–185 (QSRESQC) is RNA binding.

It belongs to the orthohepadnavirus core antigen family. In terms of assembly, homodimerizes, then multimerizes. Interacts with cytosol exposed regions of viral L glycoprotein present in the reticulum-to-Golgi compartment. Interacts with human FLNB. Phosphorylated form interacts with host importin alpha; this interaction depends on the exposure of the NLS, which itself depends upon genome maturation and/or phosphorylation of the capsid protein. Interacts with host NUP153. Phosphorylated by host SRPK1, SRPK2, and maybe protein kinase C or GAPDH. Phosphorylation is critical for pregenomic RNA packaging. Protein kinase C phosphorylation is stimulated by HBx protein and may play a role in transport of the viral genome to the nucleus at the late step during the viral replication cycle.

The protein resides in the virion. Its subcellular location is the host cytoplasm. Functionally, self assembles to form an icosahedral capsid. Most capsids appear to be large particles with an icosahedral symmetry of T=4 and consist of 240 copies of capsid protein, though a fraction forms smaller T=3 particles consisting of 180 capsid proteins. Entering capsids are transported along microtubules to the nucleus. Phosphorylation of the capsid is thought to induce exposure of nuclear localization signal in the C-terminal portion of the capsid protein that allows binding to the nuclear pore complex via the importin (karyopherin-) alpha and beta. Capsids are imported in intact form through the nuclear pore into the nuclear basket, where it probably binds NUP153. Only capsids that contain the mature viral genome can release the viral DNA and capsid protein into the nucleoplasm. Immature capsids get stuck in the basket. Capsids encapsulate the pre-genomic RNA and the P protein. Pre-genomic RNA is reverse-transcribed into DNA while the capsid is still in the cytoplasm. The capsid can then either be directed to the nucleus, providing more genomes for transcription, or bud through the endoplasmic reticulum to provide new virions. This chain is Capsid protein, found in Homo sapiens (Human).